A 1308-amino-acid chain; its full sequence is Limbin (1308 aa).

An N-terminal signal peptide occupies residues 1–26 (MDPSGSRGRPTWVLAGGLLAVALALG). Topologically, residues 27-300 (GRGCLGASSR…VLPHHGLHAA (274 aa)) are extracellular. Residues 36–76 (RPRWRPLGAQPPRDPQVAPRSGPGLRIPPGRSGAGPESSTQ) form a disordered region. A glycan (N-linked (GlcNAc...) asparagine) is linked at Asn-220. Residues 301–321 (GFFIAFLLSLVLTWAALFLMV) form a helical membrane-spanning segment. At 322 to 1308 (RYQCLKGNML…KKAMRALGMD (987 aa)) the chain is on the cytoplasmic side. Coiled coils occupy residues 455–578 (TAEC…ELMD), 636–800 (DQME…DRDQ), and 1001–1113 (ASEM…EADT). Residues 784-801 (MAARAEQLEGEERDRDQE) are compositionally biased toward basic and acidic residues. Residues 784-816 (MAARAEQLEGEERDRDQEGVQSVRQRLKDDAPE) form a disordered region.

In terms of assembly, component of the EvC complex composed of EFCAB7, IQCE, EVC2 and EVC; built from two subcomplexes, EVC2:EVC and EFCAB7:IQCE. Interacts with EVC. Interacts (via N-terminal end) with EFCAB7. Interacts (via N-terminal end) with IQCE. As to expression, found in the heart, placenta, lung, liver, skeletal muscle, kidney and pancreas.

The protein resides in the cell membrane. It is found in the cytoplasm. It localises to the cytoskeleton. Its subcellular location is the cilium basal body. The protein localises to the cell projection. The protein resides in the cilium. It is found in the cilium membrane. It localises to the nucleus. In terms of biological role, component of the EvC complex that positively regulates ciliary Hedgehog (Hh) signaling. Plays a critical role in bone formation and skeletal development. May be involved in early embryonic morphogenesis. The polypeptide is Limbin (EVC2) (Homo sapiens (Human)).